We begin with the raw amino-acid sequence, 98 residues long: NADH-ubiquinone oxidoreductase chain 4L (98 aa).

Helical transmembrane passes span M1–M21, S29–L49, and I61–V81.

The protein belongs to the complex I subunit 4L family. As to quaternary structure, core subunit of respiratory chain NADH dehydrogenase (Complex I) which is composed of 45 different subunits.

The protein localises to the mitochondrion inner membrane. The catalysed reaction is a ubiquinone + NADH + 5 H(+)(in) = a ubiquinol + NAD(+) + 4 H(+)(out). Core subunit of the mitochondrial membrane respiratory chain NADH dehydrogenase (Complex I) which catalyzes electron transfer from NADH through the respiratory chain, using ubiquinone as an electron acceptor. Part of the enzyme membrane arm which is embedded in the lipid bilayer and involved in proton translocation. The chain is NADH-ubiquinone oxidoreductase chain 4L (MT-ND4L) from Phoca fasciata (Ribbon seal).